We begin with the raw amino-acid sequence, 766 residues long: 5-methyltetrahydropteroyltriglutamate--homocysteine methyltransferase (766 aa).

5-methyltetrahydropteroyltri-L-glutamate contacts are provided by residues 16–19 (RELK) and Lys-117. Residues 442–444 (IGS) and Glu-495 each bind L-homocysteine. Residues 442–444 (IGS) and Glu-495 contribute to the L-methionine site. Residues 526 to 527 (RC) and Trp-572 each bind 5-methyltetrahydropteroyltri-L-glutamate. Residue Asp-610 coordinates L-homocysteine. An L-methionine-binding site is contributed by Asp-610. Residue Glu-616 participates in 5-methyltetrahydropteroyltri-L-glutamate binding. Zn(2+)-binding residues include His-652, Cys-654, and Glu-676. The active-site Proton donor is the His-705. Cys-737 provides a ligand contact to Zn(2+).

This sequence belongs to the vitamin-B12 independent methionine synthase family. Requires Zn(2+) as cofactor.

The catalysed reaction is 5-methyltetrahydropteroyltri-L-glutamate + L-homocysteine = tetrahydropteroyltri-L-glutamate + L-methionine. It functions in the pathway amino-acid biosynthesis; L-methionine biosynthesis via de novo pathway; L-methionine from L-homocysteine (MetE route): step 1/1. Catalyzes the transfer of a methyl group from 5-methyltetrahydrofolate to homocysteine resulting in methionine formation. This chain is 5-methyltetrahydropteroyltriglutamate--homocysteine methyltransferase, found in Bordetella avium (strain 197N).